We begin with the raw amino-acid sequence, 633 residues long: Bifunctional enzyme CysN/CysC (633 aa).

A sulfate adenylyltransferase region spans residues 1-463; the sequence is MSHQSDLISE…REERAGRFGQ (463 aa). The 220-residue stretch at 22–241 folds into the tr-type G domain; it reads KELLRFLTCG…TVEIAADRNL (220 aa). Residues 31–38 form a G1 region; that stretch reads GNVDDGKS. Residue 31–38 participates in GTP binding; that stretch reads GNVDDGKS. The interval 89-93 is G2; that stretch reads GITID. The G3 stretch occupies residues 110 to 113; the sequence is DTPG. Residues 110–114 and 165–168 each bind GTP; these read DTPGH and NKMD. Residues 165–168 form a G4 region; the sequence is NKMD. The tract at residues 204 to 206 is G5; that stretch reads SAL. Positions 464-633 are adenylyl-sulfate kinase; the sequence is QPATVLFSGL…LDLLRERQAI (170 aa). 472 to 479 lines the ATP pocket; it reads GLSGAGKS.

The protein in the C-terminal section; belongs to the APS kinase family. In the N-terminal section; belongs to the TRAFAC class translation factor GTPase superfamily. Classic translation factor GTPase family. CysN/NodQ subfamily. Heterodimer composed of CysD, the smaller subunit, and CysNC.

The catalysed reaction is sulfate + ATP + H(+) = adenosine 5'-phosphosulfate + diphosphate. The enzyme catalyses adenosine 5'-phosphosulfate + ATP = 3'-phosphoadenylyl sulfate + ADP + H(+). It participates in sulfur metabolism; hydrogen sulfide biosynthesis; sulfite from sulfate: step 1/3. It functions in the pathway sulfur metabolism; hydrogen sulfide biosynthesis; sulfite from sulfate: step 2/3. With CysD forms the ATP sulfurylase (ATPS) that catalyzes the adenylation of sulfate producing adenosine 5'-phosphosulfate (APS) and diphosphate, the first enzymatic step in sulfur assimilation pathway. APS synthesis involves the formation of a high-energy phosphoric-sulfuric acid anhydride bond driven by GTP hydrolysis by CysN coupled to ATP hydrolysis by CysD. Functionally, APS kinase catalyzes the synthesis of activated sulfate. This Pseudomonas aeruginosa (strain ATCC 15692 / DSM 22644 / CIP 104116 / JCM 14847 / LMG 12228 / 1C / PRS 101 / PAO1) protein is Bifunctional enzyme CysN/CysC (cysNC).